We begin with the raw amino-acid sequence, 822 residues long: Myosin-D (822 aa).

The Myosin motor domain occupies 95-770; that stretch reads LTYGDIGGLP…AAKMLVRLQR (676 aa). Residue 189-196 coordinates ATP; that stretch reads GESGAGKT. The segment at 660–670 is actin-binding; it reads SHFIRCIKPND. The tail stretch occupies residues 772–822; sequence ALSAWEPLVGVFEGMTVLKRAKQLSTGRAVPATRICANVRRKLVQAGIKVC.

This sequence belongs to the TRAFAC class myosin-kinesin ATPase superfamily. Myosin family.

It localises to the cell membrane. It is found in the cytoplasm. Myosins are actin-based motor molecules with ATPase activity. Unconventional myosins serve in intracellular movements. Their highly divergent tails are presumed to bind to membranous compartments, which would be moved relative to actin filaments. This is Myosin-D from Toxoplasma gondii.